Reading from the N-terminus, the 514-residue chain is 5'-AMP-activated protein kinase subunit gamma-3 (514 aa).

2 disordered regions span residues 1-121 and 134-155; these read MELA…FPKA and DNPP…SDSN. A compositionally biased stretch (polar residues) spans 59–71; sequence SRSWPSRAVTTSS. CBS domains are found at residues 222–283, 305–363, and 380–440; these read MATS…RSPL, CFKP…GTLL, and TFRD…HLDM. ADP-binding positions include arginine 250, 265–270, valine 310, 331–332, and lysine 350; these read MLTITD and HR. AMP contacts are provided by residues arginine 250, 265 to 270, valine 310, histidine 331, 331 to 332, lysine 350, threonine 380, alanine 385, 406 to 407, 422 to 425, arginine 449, leucine 457, histidine 478, 478 to 479, and 494 to 497; these read MLTITD, HR, SA, SRFD, and SLSD. ATP is bound by residues arginine 250, 265–270, valine 310, 331–332, arginine 332, and lysine 350; these read MLTITD and HR. The AMPK pseudosubstrate signature appears at 318–339; it reads LFEAVYALIKNRIHRLPVLDPV. Residues 422 to 425, arginine 449, leucine 457, and 478 to 479 contribute to the ADP site; these read SRFD and HR. ATP is bound by residues 422–425, arginine 449, leucine 457, and 478–479; these read SRFD and HR. The region spanning 452 to 511 is the CBS 4 domain; it reads CLEGVLSCQPHETLGEVIDRIVREQVHRLVLVDETQHLLGVVSLSDILQALVLSPAGIDA.

Belongs to the 5'-AMP-activated protein kinase gamma subunit family. In terms of assembly, AMPK is a heterotrimer of an alpha catalytic subunit (PRKAA1 or PRKAA2), a beta (PRKAB1 or PRKAB2) and a gamma non-catalytic subunits (PRKAG1, PRKAG2 or PRKAG3). Interacts with FNIP1 and FNIP2. Phosphorylated by ULK1; leading to negatively regulate AMPK activity and suggesting the existence of a regulatory feedback loop between ULK1 and AMPK. Post-translationally, glycosylated; O-GlcNAcylated by OGT, promoting the AMP-activated protein kinase (AMPK) activity. Muscle.

AMP/ATP-binding subunit of AMP-activated protein kinase (AMPK), an energy sensor protein kinase that plays a key role in regulating cellular energy metabolism. In response to reduction of intracellular ATP levels, AMPK activates energy-producing pathways and inhibits energy-consuming processes: inhibits protein, carbohydrate and lipid biosynthesis, as well as cell growth and proliferation. AMPK acts via direct phosphorylation of metabolic enzymes, and by longer-term effects via phosphorylation of transcription regulators. AMPK also acts as a regulator of cellular polarity by remodeling the actin cytoskeleton; probably by indirectly activating myosin. The AMPK gamma3 subunit is a non-catalytic subunit with a regulatory role in muscle energy metabolism. It mediates binding to AMP, ADP and ATP, leading to AMPK activation or inhibition: AMP-binding results in allosteric activation of alpha catalytic subunit (PRKAA1 or PRKAA2) both by inducing phosphorylation and preventing dephosphorylation of catalytic subunits. ADP also stimulates phosphorylation, without stimulating already phosphorylated catalytic subunit. ATP promotes dephosphorylation of catalytic subunit, rendering the AMPK enzyme inactive. This Sus scrofa (Pig) protein is 5'-AMP-activated protein kinase subunit gamma-3 (PRKAG3).